We begin with the raw amino-acid sequence, 215 residues long: Inositol diphosphatase DSP1 (215 aa).

A Tyrosine-protein phosphatase domain is found at 58-209; it reads NFSMVDNGIF…VSSFSHIPMS (152 aa). The tract at residues 114–126 is WPD loop important for active site topology; the sequence is FGIEGNKEPFVNI. 1D-myo-inositol hexakisphosphate contacts are provided by Asn125, Ile126, His129, and Lys130. Cys150 acts as the Phosphocysteine intermediate in catalysis.

Belongs to the protein-tyrosine phosphatase family. Atypical dual-specificity phosphatase Siw14-like subfamily. In terms of assembly, homodimer and homohexamer; behaves as a monomer in solution. Highly expressed in siliques and at lower levels in roots, leaves and flowers.

The catalysed reaction is 5-diphospho-1D-myo-inositol 1,2,3,4,6-pentakisphosphate + H2O = 1D-myo-inositol hexakisphosphate + phosphate + H(+). It carries out the reaction 1,5-bis(diphospho)-1D-myo-inositol 2,3,4,6-tetrakisphosphate + H2O = 1-diphospho-1D-myo-inositol 2,3,4,5,6-pentakisphosphate + phosphate + 2 H(+). It catalyses the reaction 3,5-bis(diphospho)-1D-myo-inositol 1,2,4,6-tetrakisphosphate + H2O = 3-diphospho-1D-myo-inositol 1,2,4,5,6-pentakisphosphate + phosphate + 2 H(+). The enzyme catalyses 6-diphospho-1D-myo-inositol pentakisphosphate + H2O = 1D-myo-inositol hexakisphosphate + phosphate + H(+). The catalysed reaction is 5-diphospho-1D-myo-inositol 1,3,4,6-tetrakisphosphate + H2O = 1D-myo-inositol 1,3,4,5,6-pentakisphosphate + phosphate + H(+). Inhibited by manganese, calcium and zinc ions but not magnesium ions. Cleaves the beta-phosphate at the 5-position of soluble inositol pyrophosphates. Has highest activity on 5-diphosphoinositol 1,2,3,4,6-pentakisphosphate (5-InsP(7)), 1,5-bis-diphosphoinositol 2,3,4,6-tetrakisphosphate (1,5-InsP(8)) and 3,5-InsP(8), but has weak activity against 1-diphosphoinositol 2,3,4,5,6-pentakisphosphate (1-InsP(7)). Dephosphorylates the phosphoinositides PI(3,4,5)P3, PI(3,5)P2, but not PI(3)P, PI(3,4)P2 or PI(4,5)P2. Possesses phosphotyrosine phosphatase activity in vitro, and can hydrolyze para-nitrophenyl phosphate, O-methylfluorescein phosphate, polyphosphate and ATP. In Arabidopsis thaliana (Mouse-ear cress), this protein is Inositol diphosphatase DSP1.